We begin with the raw amino-acid sequence, 356 residues long: UDP-N-acetylglucosamine--N-acetylmuramyl-(pentapeptide) pyrophosphoryl-undecaprenol N-acetylglucosamine transferase (356 aa).

UDP-N-acetyl-alpha-D-glucosamine is bound by residues 11-13 (TAG), Asn-123, Arg-159, and Ser-192.

It belongs to the glycosyltransferase 28 family. MurG subfamily.

It localises to the cell membrane. It carries out the reaction di-trans,octa-cis-undecaprenyl diphospho-N-acetyl-alpha-D-muramoyl-L-alanyl-D-glutamyl-meso-2,6-diaminopimeloyl-D-alanyl-D-alanine + UDP-N-acetyl-alpha-D-glucosamine = di-trans,octa-cis-undecaprenyl diphospho-[N-acetyl-alpha-D-glucosaminyl-(1-&gt;4)]-N-acetyl-alpha-D-muramoyl-L-alanyl-D-glutamyl-meso-2,6-diaminopimeloyl-D-alanyl-D-alanine + UDP + H(+). It participates in cell wall biogenesis; peptidoglycan biosynthesis. Functionally, cell wall formation. Catalyzes the transfer of a GlcNAc subunit on undecaprenyl-pyrophosphoryl-MurNAc-pentapeptide (lipid intermediate I) to form undecaprenyl-pyrophosphoryl-MurNAc-(pentapeptide)GlcNAc (lipid intermediate II). The protein is UDP-N-acetylglucosamine--N-acetylmuramyl-(pentapeptide) pyrophosphoryl-undecaprenol N-acetylglucosamine transferase of Tropheryma whipplei (strain Twist) (Whipple's bacillus).